Here is a 388-residue protein sequence, read N- to C-terminus: Cuticle-degrading protease (388 aa).

A signal peptide spans 1-18; sequence MHLSALLTLLPAVLAAPA. A propeptide spanning residues 19–107 is cleaved from the precursor; it reads TIGRRAEPAP…IEKDAVMRIS (89 aa). The region spanning 41–106 is the Inhibitor I9 domain; sequence KYIVKFKDDI…FIEKDAVMRI (66 aa). Residues 116–388 enclose the Peptidase S8 domain; the sequence is PWGLGRISHR…TVNYLAYNGA (273 aa). 2 disulfides stabilise this stretch: Cys143/Cys233 and Cys288/Cys360. Residues Asp148 and His179 each act as charge relay system in the active site. Asn296 is a glycosylation site (N-linked (GlcNAc...) asparagine). Residue Ser334 is the Charge relay system of the active site.

It belongs to the peptidase S8 family.

It localises to the secreted. Capable of breaching the insect cuticle. The chain is Cuticle-degrading protease (PR1) from Metarhizium anisopliae (Entomophthora anisopliae).